The sequence spans 435 residues: Enolase (435 aa).

Gln167 is a (2R)-2-phosphoglycerate binding site. Glu209 (proton donor) is an active-site residue. Residues Asp246, Glu291, and Asp318 each coordinate Mg(2+). Residues Lys343, Arg372, Ser373, and Lys394 each coordinate (2R)-2-phosphoglycerate. Lys343 (proton acceptor) is an active-site residue.

It belongs to the enolase family. In terms of assembly, component of the RNA degradosome, a multiprotein complex involved in RNA processing and mRNA degradation. Requires Mg(2+) as cofactor.

It is found in the cytoplasm. It localises to the secreted. Its subcellular location is the cell surface. It carries out the reaction (2R)-2-phosphoglycerate = phosphoenolpyruvate + H2O. It participates in carbohydrate degradation; glycolysis; pyruvate from D-glyceraldehyde 3-phosphate: step 4/5. Catalyzes the reversible conversion of 2-phosphoglycerate (2-PG) into phosphoenolpyruvate (PEP). It is essential for the degradation of carbohydrates via glycolysis. This chain is Enolase, found in Psychromonas ingrahamii (strain DSM 17664 / CCUG 51855 / 37).